We begin with the raw amino-acid sequence, 443 residues long: MSTSHASAASARETTEGTVYTVTGGDWDEVVQSAAKSDDERIVVNMGPQHPSTHGVLRLILEIDGETVTEARCGIGYLHTGIEKNLEYRTWTQGTTFVTRMDYLTPFFNETAYCLAVEKLLGIENEIPDRASIIRVLLMELNRMSSHLVCIATGGMELGATTIMIYGFRDRELILDIYELITGLRMNHAYIRPGGLAQDLPPGAVDQIREFVKKMKKNLPEYDKLATGNPIFKARMQDVGYLDLAGCMALGATGPILRSAGLPHDLRKSQPYCGYETYDFDVPTADTCDSYGRFLIRLEEMRQSLRIVEQCLDRLAPGPVMVADKKIAWPAQLALGPDGLGNSLDHIKKIMGTSMEALIHHFKLVTEGFRVPPGQTYSAVESPKGELGVHAVSDGGTRPYRVHFRDPSFTNLQAMAAMCEGGQVADVIVAVASIDPVMGGVDR.

It belongs to the complex I 49 kDa subunit family. In terms of assembly, NDH-1 is composed of 14 different subunits. Subunits NuoB, C, D, E, F, and G constitute the peripheral sector of the complex.

It localises to the cell membrane. It carries out the reaction a quinone + NADH + 5 H(+)(in) = a quinol + NAD(+) + 4 H(+)(out). In terms of biological role, NDH-1 shuttles electrons from NADH, via FMN and iron-sulfur (Fe-S) centers, to quinones in the respiratory chain. The immediate electron acceptor for the enzyme in this species is believed to be a menaquinone. Couples the redox reaction to proton translocation (for every two electrons transferred, four hydrogen ions are translocated across the cytoplasmic membrane), and thus conserves the redox energy in a proton gradient. This chain is NADH-quinone oxidoreductase subunit D 1, found in Streptomyces avermitilis (strain ATCC 31267 / DSM 46492 / JCM 5070 / NBRC 14893 / NCIMB 12804 / NRRL 8165 / MA-4680).